The sequence spans 372 residues: Putative glutamate--cysteine ligase 2 (372 aa).

Belongs to the glutamate--cysteine ligase type 2 family. YbdK subfamily. In terms of assembly, homodimer.

It carries out the reaction L-cysteine + L-glutamate + ATP = gamma-L-glutamyl-L-cysteine + ADP + phosphate + H(+). Its function is as follows. ATP-dependent carboxylate-amine ligase which exhibits weak glutamate--cysteine ligase activity. The sequence is that of Putative glutamate--cysteine ligase 2 (ybdK) from Salmonella arizonae (strain ATCC BAA-731 / CDC346-86 / RSK2980).